We begin with the raw amino-acid sequence, 692 residues long: Elongation factor G (692 aa).

The tr-type G domain maps to 8 to 282 (ENTRNIGIMA…AVIDYLPSPL (275 aa)). Residues 17–24 (AHIDAGKT), 81–85 (DTPGH), and 135–138 (NKMD) each bind GTP.

The protein belongs to the TRAFAC class translation factor GTPase superfamily. Classic translation factor GTPase family. EF-G/EF-2 subfamily.

Its subcellular location is the cytoplasm. Functionally, catalyzes the GTP-dependent ribosomal translocation step during translation elongation. During this step, the ribosome changes from the pre-translocational (PRE) to the post-translocational (POST) state as the newly formed A-site-bound peptidyl-tRNA and P-site-bound deacylated tRNA move to the P and E sites, respectively. Catalyzes the coordinated movement of the two tRNA molecules, the mRNA and conformational changes in the ribosome. The sequence is that of Elongation factor G from Bacillus cereus (strain Q1).